The following is a 1044-amino-acid chain: Disease resistance protein PIK6-NP (1044 aa).

Residues 3–184 are structured coiled coil (CC) domain; it reads LAVGASEATM…PQIVSIKEPV (182 aa). The NB-ARC domain occupies 187–543; the sequence is KTVMENLEKW…IAEGFATEKQ (357 aa). Residues 258–302 form a disordered region; that stretch reads QVSKQEEAGGSTESSSRDENTREPQGSSSTSSREENTAESGTKRM. LRR repeat units follow at residues 635–657, 682–705, and 706–728; these read LAQV…SFNY, MLVL…IEKL, and EYLE…VGQL. The tract at residues 737 to 771 is disordered; sequence GNKNTRKGLRLPQEKRNKAMKNPSPQGKTKEPAEK. LRR repeat units follow at residues 808–834, 840–862, 866–888, 889–911, 935–958, and 980–1004; these read LTGL…LLSS, SCGL…LYNM, PRYL…ITSI, TTLN…ILRN, KGIL…EFKS, and MPAL…ILEN.

Belongs to the disease resistance NB-LRR family.

Probable disease resistance protein. Resistance proteins guard the plant against pathogens that contain an appropriate avirulence protein via an indirect interaction with this avirulence protein. That triggers a defense system including the hypersensitive response, which restricts the pathogen growth. At the opposite of cultivar Kusabue, the cultivar Nipponbare doesn't recognize the effector avirulence protein AVR-Pik from M.oryzae. This is Disease resistance protein PIK6-NP from Oryza sativa subsp. japonica (Rice).